The primary structure comprises 434 residues: Serine hydroxymethyltransferase (434 aa).

Residues Leu-132 and Gly-136–Leu-138 contribute to the (6S)-5,6,7,8-tetrahydrofolate site. Lys-241 is subject to N6-(pyridoxal phosphate)lysine.

This sequence belongs to the SHMT family. In terms of assembly, homodimer. It depends on pyridoxal 5'-phosphate as a cofactor.

It localises to the cytoplasm. It catalyses the reaction (6R)-5,10-methylene-5,6,7,8-tetrahydrofolate + glycine + H2O = (6S)-5,6,7,8-tetrahydrofolate + L-serine. It functions in the pathway one-carbon metabolism; tetrahydrofolate interconversion. It participates in amino-acid biosynthesis; glycine biosynthesis; glycine from L-serine: step 1/1. Its function is as follows. Catalyzes the reversible interconversion of serine and glycine with tetrahydrofolate (THF) serving as the one-carbon carrier. This reaction serves as the major source of one-carbon groups required for the biosynthesis of purines, thymidylate, methionine, and other important biomolecules. Also exhibits THF-independent aldolase activity toward beta-hydroxyamino acids, producing glycine and aldehydes, via a retro-aldol mechanism. This chain is Serine hydroxymethyltransferase, found in Kineococcus radiotolerans (strain ATCC BAA-149 / DSM 14245 / SRS30216).